Reading from the N-terminus, the 573-residue chain is Glutathione hydrolase 5 proenzyme (573 aa).

Topologically, residues 1-8 (MAWGHRAT) are cytoplasmic. Residues 9–29 (VCLVLLGVGLGLVIVVLAAVL) traverse the membrane as a helical; Signal-anchor for type II membrane protein segment. At 30–573 (SPRQASCGPG…LRKAGKASGY (544 aa)) the chain is on the extracellular side. Asparagine 98 carries N-linked (GlcNAc...) asparagine glycosylation. Arginine 110 is a binding site for L-glutamate. N-linked (GlcNAc...) asparagine glycans are attached at residues asparagine 185, asparagine 204, asparagine 277, asparagine 303, asparagine 347, and asparagine 378. The active-site Nucleophile is the threonine 389. Residues threonine 407, glutamate 428, and 454 to 455 (SS) contribute to the L-glutamate site.

The protein belongs to the gamma-glutamyltransferase family. Heterodimer composed of the light and heavy chains. The active site is located in the light chain. Post-translationally, cleaved by autocatalysis into a large and a small subunit. Glycosylated. Very low level of expression. Detected in spleen lymphocytes, medullary and paracortical thymic lymphocytes, lung interstitial cells, bronchial epithelium, proximal tubules in kidney, crypt cells in small intestine, neurons in brain stem and cerebral cortex and in Purkinje cells. As to expression, very low expression.

The protein localises to the membrane. It carries out the reaction glutathione + H2O = L-cysteinylglycine + L-glutamate. It catalyses the reaction an S-substituted glutathione + H2O = an S-substituted L-cysteinylglycine + L-glutamate. The enzyme catalyses leukotriene C4 + H2O = leukotriene D4 + L-glutamate. The catalysed reaction is S-[(2E,6E,10E)-geranylgeranyl]-L-glutathione + H2O = S-[(2E,6E,10E)-geranylgeranyl]-L-cysteinylglycine + L-glutamate. It carries out the reaction an N-terminal (5-L-glutamyl)-[peptide] + an alpha-amino acid = 5-L-glutamyl amino acid + an N-terminal L-alpha-aminoacyl-[peptide]. The protein operates within lipid metabolism; leukotriene D4 biosynthesis. Its pathway is sulfur metabolism; glutathione metabolism. With respect to regulation, inhibited by serine-borate. Functionally, cleaves the gamma-glutamyl bond of extracellular glutathione tripeptide (gamma-Glu-Cys-Gly) and certain glutathione conjugates. Hydrolyzes glutathione releasing L-Glu and Cys-Gly dipeptide which is further metabolized to maintain extracellular cysteine levels but also to provide cysteine necessary for intracellular glutathione synthesis. Among glutathione-S-conjugates metabolizes leukotriene C4 (LTC4) and S-geranylgeranyl-glutathione (GGG), but is inactive toward gamma-glutamyl leucine. Converts extracellular LTC4 to LTD4 during acute inflammatory response. Acts as a negative regulator of GGG bioactivity. GGT5 (via GGG catabolism) and ABCC1 (via extracellular transport) establish GGG gradients within lymphoid tissues to position P2RY8-positive lymphocytes at germinal centers in lymphoid follicles and restrict their chemotactic transmigration from blood vessels to bone marrow parenchyma. The transpeptidation reaction, i.e. the transfer of gamma-glutamyl moiety to an acceptor molecule to yield a new gamma-glutamyl compound requires high concentration of dipeptide acceptor and is considered nonphysiological. This Mus musculus (Mouse) protein is Glutathione hydrolase 5 proenzyme (Ggt5).